The primary structure comprises 305 residues: Dihydroorotate dehydrogenase B (NAD(+)), catalytic subunit (305 aa).

FMN-binding positions include serine 23 and lysine 47–glycine 48. Residues lysine 47 and asparagine 71–leucine 75 each bind substrate. The FMN site is built by asparagine 101 and asparagine 129. Residue asparagine 129 coordinates substrate. Cysteine 132 serves as the catalytic Nucleophile. FMN is bound by residues lysine 167 and isoleucine 193. Asparagine 194–threonine 195 provides a ligand contact to substrate. FMN is bound by residues glycine 219, glycine 245–glycine 246, and glycine 267–threonine 268.

The protein belongs to the dihydroorotate dehydrogenase family. Type 1 subfamily. Heterotetramer of 2 PyrK and 2 PyrD type B subunits. FMN serves as cofactor.

It localises to the cytoplasm. The enzyme catalyses (S)-dihydroorotate + NAD(+) = orotate + NADH + H(+). It participates in pyrimidine metabolism; UMP biosynthesis via de novo pathway; orotate from (S)-dihydroorotate (NAD(+) route): step 1/1. Catalyzes the conversion of dihydroorotate to orotate with NAD(+) as electron acceptor. This is Dihydroorotate dehydrogenase B (NAD(+)), catalytic subunit (pyrD) from Geobacter sp. (strain M21).